The following is a 182-amino-acid chain: Small ribosomal subunit protein uS4c (182 aa).

Positions 82–143 (MRLDNILFRL…KQRSKALIQN (62 aa)) constitute an S4 RNA-binding domain.

It belongs to the universal ribosomal protein uS4 family. As to quaternary structure, part of the 30S ribosomal subunit. Contacts protein S5. The interaction surface between S4 and S5 is involved in control of translational fidelity.

Its subcellular location is the plastid. It is found in the chloroplast. In terms of biological role, one of the primary rRNA binding proteins, it binds directly to 16S rRNA where it nucleates assembly of the body of the 30S subunit. Functionally, with S5 and S12 plays an important role in translational accuracy. The chain is Small ribosomal subunit protein uS4c (rps4) from Isophysis tasmanica.